A 354-amino-acid chain; its full sequence is Glucose 1-dehydrogenase (354 aa).

Residues Met1 to Glu27 form a disordered region. The span at Thr7–Ser22 shows a compositional bias: basic and acidic residues. Asp38 is a binding site for Zn(2+). Thr40 lines the substrate pocket. 2 residues coordinate Zn(2+): His63 and Glu64. The tract at residues Pro91 to Gly110 is disordered. Residues Glu114 and Glu150 each coordinate substrate. Glu150 contacts Zn(2+). NADP(+) contacts are provided by residues Asn181–Leu184, Arg204–Arg205, Leu269–Ile271, and Thr298–Asn300. Asn300 provides a ligand contact to substrate.

Belongs to the zinc-containing alcohol dehydrogenase family. Glucose 1-dehydrogenase subfamily. It depends on Zn(2+) as a cofactor.

It catalyses the reaction D-glucose + NAD(+) = D-glucono-1,5-lactone + NADH + H(+). The enzyme catalyses D-glucose + NADP(+) = D-glucono-1,5-lactone + NADPH + H(+). Catalyzes the NAD(P)(+)-dependent oxidation of D-glucose to D-gluconate via gluconolactone. Can utilize both NAD(+) and NADP(+) as electron acceptor. Is involved in the degradation of glucose through a modified Entner-Doudoroff pathway. The sequence is that of Glucose 1-dehydrogenase from Haloarcula marismortui (strain ATCC 43049 / DSM 3752 / JCM 8966 / VKM B-1809) (Halobacterium marismortui).